Consider the following 323-residue polypeptide: MAAGGAQGSGGARLLVCFLGVFVCYFYYGILQETITRGTYGEGEKQEKFRFALSLVFVQCIVNALFAKLLIQFFDSGKTDRTQSWLYAACSLSYLGAMVSSNSALQFVNYPTQVLGKSCKPIPVMLLGVTLLRKKYPLSKYLCVLLIVLGVALFMYKPKNTGSGGDEHTFGYGELLLLLSLTLDGLTGVSQDHMRAHFQTGSNHMMLYINLWSSLFLGAGIVFTGELWDFLSFTERYPSIVYNIMLFSLTSALGQTFIFMTVVYFGPLTCSIITTTRKFFTILASVILFSNPISSIQWVGTILVFLGLGLDATYGKGSKKPSH.

8 consecutive transmembrane segments (helical) span residues 15–35, 51–71, 85–105, 136–156, 169–189, 205–225, 253–273, and 286–306; these read LVCFLGVFVCYFYYGILQETI, FALSLVFVQCIVNALFAKLLI, WLYAACSLSYLGAMVSSNSAL, YPLSKYLCVLLIVLGVALFMY, TFGYGELLLLLSLTLDGLTGV, MMLYINLWSSLFLGAGIVFTG, LGQTFIFMTVVYFGPLTCSII, and VILFSNPISSIQWVGTILVFL. The Di-lysine motif signature appears at 319–323; the sequence is KKPSH.

The protein belongs to the nucleotide-sugar transporter family. SLC35B subfamily.

The protein resides in the endoplasmic reticulum membrane. In terms of biological role, probable sugar transporter. The chain is Solute carrier family 35 member B1 (slc35b1) from Xenopus tropicalis (Western clawed frog).